The sequence spans 134 residues: ATP synthase epsilon chain (134 aa).

This sequence belongs to the ATPase epsilon chain family. F-type ATPases have 2 components, CF(1) - the catalytic core - and CF(0) - the membrane proton channel. CF(1) has five subunits: alpha(3), beta(3), gamma(1), delta(1), epsilon(1). CF(0) has three main subunits: a, b and c.

Its subcellular location is the cell membrane. Produces ATP from ADP in the presence of a proton gradient across the membrane. This chain is ATP synthase epsilon chain, found in Alkaliphilus oremlandii (strain OhILAs) (Clostridium oremlandii (strain OhILAs)).